The following is a 475-amino-acid chain: Putative poly(A) polymerase catalytic subunit (475 aa).

Belongs to the poxviridae poly(A) polymerase catalytic subunit family. Highly divergent.

The protein localises to the virion. The enzyme catalyses RNA(n) + ATP = RNA(n)-3'-adenine ribonucleotide + diphosphate. Polymerase that creates the 3'-poly(A) tail of mRNA's. This Ornithodoros (relapsing fever ticks) protein is Putative poly(A) polymerase catalytic subunit.